The following is a 458-amino-acid chain: Transcription factor PCF5 (458 aa).

4 disordered regions span residues 1-103 (MGDA…RGPR), 159-182 (GAGAGNAAAPPSSSTHPDSAENSD), 278-299 (MFHHQQHRHGGGGGGGNGTTQQ), and 424-458 (RLPARIQGDEEHNGGGGGNGDKPPPPSSVSSASHH). The span at 65–74 (RGGGGGGGGE) shows a compositional bias: gly residues. The TCP domain maps to 89–147 (RKDRHSKVCTARGPRDRRVRLSAHTAIQFYDVQDRLGYDRPSKAVDWLIKNAKDAIDKL).

In terms of assembly, forms homodimers and heterodimers.

The protein localises to the nucleus. In terms of biological role, transcription activator. Binds the promoter core sequence 5'-GGNCC-3'. This is Transcription factor PCF5 (PCF5) from Oryza sativa subsp. japonica (Rice).